Reading from the N-terminus, the 624-residue chain is MDLLGLKELDNNKLVSKAKENGVEFSDLFLLSSGYLRDRENASASVSSKNERMVLNEERQNCWTKRNDPKGLTYYQLLKPSEVEILSRPETRRKRMACQVFFLNYYISTIEYHKLRKERLEEFTACTSSLKQSKQKRLWKEHCGRERAFLRKKRTKIQCSHFDLLVKLGQGGYGSVWLAKKRNTHELLAMKMMKKSTLQQLNEVKHILNERDILTNTNSEWLVKLYYAFQDKEKVYLAMEYVPGGDFRTFLTTKGLLHENQTRFYLAEMVAAISAVHKLGYMHRDLKPENFLIDQKGHIKLSDFGLSTAIVTSNQVNRLQHALVSAVNPQRPYLTQKQRRNIYKALLEKNENKVNSVVGSPEYMAPEVVYGKKYDRTVDYWSLGCICYECLVGYPPFSGSTLQETWTNLYYWREMLQRPSKNENGIYDKKARSVSDEAWSFITKCLTEPTSRFQSTIEIQKHPFFKRLHWNGLRKRAVPPFVPRLENQLDTSYFDDFNDEQVLDAYKDVYEKQRKAEQKAKSNGVMNGNQRQFLGFTFKYRPNARKPLVGRHREKRQLRKEKPEKKNNSTKQKDLITVSHNKGTTAIEDLDEDKRSKTKGHKTKSSRVHRLLERKGKDLYEFLL.

The Protein kinase domain maps to 162–465 (FDLLVKLGQG…TIEIQKHPFF (304 aa)). ATP is bound by residues 168–176 (LGQGGYGSV) and lysine 191. Aspartate 285 (proton acceptor) is an active-site residue. The 83-residue stretch at 466 to 548 (KRLHWNGLRK…KYRPNARKPL (83 aa)) folds into the AGC-kinase C-terminal domain. Residues 545–559 (RKPLVGRHREKRQLR) show a composition bias toward basic residues. Residues 545 to 617 (RKPLVGRHRE…VHRLLERKGK (73 aa)) are disordered. Basic and acidic residues predominate over residues 560–574 (KEKPEKKNNSTKQKD). Over residues 596 to 609 (SKTKGHKTKSSRVH) the composition is skewed to basic residues.

It belongs to the protein kinase superfamily. Ser/Thr protein kinase family.

Its subcellular location is the cytoplasm. It localises to the nucleus. The protein resides in the nucleolus. The enzyme catalyses L-seryl-[protein] + ATP = O-phospho-L-seryl-[protein] + ADP + H(+). It catalyses the reaction L-threonyl-[protein] + ATP = O-phospho-L-threonyl-[protein] + ADP + H(+). Functionally, has a role in meiosis. The protein is Serine/threonine-protein kinase ppk35 (ppk35) of Schizosaccharomyces pombe (strain 972 / ATCC 24843) (Fission yeast).